Consider the following 323-residue polypeptide: tRNA U34 carboxymethyltransferase (323 aa).

Carboxy-S-adenosyl-L-methionine is bound by residues Lys91, Trp105, Lys110, Gly130, 152 to 154, 181 to 182, Met196, Tyr200, and Arg315; these read DPT and IE.

This sequence belongs to the class I-like SAM-binding methyltransferase superfamily. CmoB family. Homotetramer.

It catalyses the reaction carboxy-S-adenosyl-L-methionine + 5-hydroxyuridine(34) in tRNA = 5-carboxymethoxyuridine(34) in tRNA + S-adenosyl-L-homocysteine + H(+). Catalyzes carboxymethyl transfer from carboxy-S-adenosyl-L-methionine (Cx-SAM) to 5-hydroxyuridine (ho5U) to form 5-carboxymethoxyuridine (cmo5U) at position 34 in tRNAs. The protein is tRNA U34 carboxymethyltransferase of Photorhabdus laumondii subsp. laumondii (strain DSM 15139 / CIP 105565 / TT01) (Photorhabdus luminescens subsp. laumondii).